The following is a 115-amino-acid chain: Non-specific lipid-transfer protein Cor a 8.0101 (115 aa).

Positions Met1–Ala23 are cleaved as a signal peptide. Cystine bridges form between Cys27/Cys74, Cys37/Cys51, Cys52/Cys97, and Cys72/Cys111.

The protein belongs to the plant LTP family. As to quaternary structure, monomer. In terms of tissue distribution, expressed in seed (at protein level). Expressed in seed.

In terms of biological role, plant non-specific lipid-transfer proteins transfer phospholipids as well as galactolipids across membranes. May play a role in wax or cutin deposition in the cell walls of expanding epidermal cells and certain secretory tissues. The sequence is that of Non-specific lipid-transfer protein Cor a 8.0101 from Corylus avellana (European hazel).